A 1034-amino-acid chain; its full sequence is Glycine dehydrogenase (decarboxylating), mitochondrial (1034 aa).

The transit peptide at 1-63 directs the protein to the mitochondrion; the sequence is MERARRLAML…LNGFGSQVRT (63 aa). At Lys770 the chain carries N6-(pyridoxal phosphate)lysine.

Belongs to the GcvP family. In terms of assembly, homodimer. The glycine cleavage system is composed of four proteins: P, T, L and H. Requires pyridoxal 5'-phosphate as cofactor.

Its subcellular location is the mitochondrion. The enzyme catalyses N(6)-[(R)-lipoyl]-L-lysyl-[glycine-cleavage complex H protein] + glycine + H(+) = N(6)-[(R)-S(8)-aminomethyldihydrolipoyl]-L-lysyl-[glycine-cleavage complex H protein] + CO2. The glycine cleavage system catalyzes the degradation of glycine. The P protein binds the alpha-amino group of glycine through its pyridoxal phosphate cofactor; CO(2) is released and the remaining methylamine moiety is then transferred to the lipoamide cofactor of the H protein. The protein is Glycine dehydrogenase (decarboxylating), mitochondrial (GDCSP) of Flaveria anomala (Yellowtops).